Reading from the N-terminus, the 1317-residue chain is Putative late blight resistance protein homolog R1B-14 (1317 aa).

2 coiled-coil regions span residues 419-442 (RYSD…ESLQ) and 535-556 (RMNE…RLLN). Residues 521 to 823 (TVITHTSSQL…SESFIKSSEG (303 aa)) enclose the NB-ARC domain. 568–575 (GMPGLGKT) provides a ligand contact to ATP. 6 LRR repeats span residues 944 to 968 (FKFL…LFYL), 987 to 1015 (LWNL…IWDM), 1090 to 1114 (PIRL…ISAP), 1138 to 1161 (LKHL…KVSN), 1164 to 1186 (FPQL…ADDA), and 1187 to 1211 (FPNL…FMDI). The 67-residue stretch at 1251 to 1317 (IKKMVLKFDI…VSKLRKRGML (67 aa)) folds into the HMA domain.

The protein belongs to the disease resistance NB-LRR family.

Its subcellular location is the cytoplasm. The protein localises to the membrane. In terms of biological role, confers resistance to late blight (Phytophthora infestans) races carrying the avirulence gene Avr1. Resistance proteins guard the plant against pathogens that contain an appropriate avirulence protein via an indirect interaction with this avirulence protein. That triggers a defense system including the hypersensitive response, which restricts the pathogen growth. In Solanum demissum (Wild potato), this protein is Putative late blight resistance protein homolog R1B-14 (R1B-14).